Here is a 699-residue protein sequence, read N- to C-terminus: Mannan-binding lectin serine protease 1 (699 aa).

The first 19 residues, 1-19 (MRWLLLYYALCFSLSKASA), serve as a signal peptide directing secretion. The CUB 1 domain maps to 20-138 (HTVELNNMFG…TGFDAHYMAV (119 aa)). The interval 20 to 184 (HTVELNNMFG…HTDNRTCRVE (165 aa)) is homodimerization. Residues 20-184 (HTVELNNMFG…HTDNRTCRVE (165 aa)) are interaction with MBL2. An interaction with FCN2 region spans residues 20 to 278 (HTVELNNMFG…STQSHSVLIL (259 aa)). Asn-49 carries N-linked (GlcNAc...) asparagine glycosylation. Residues Glu-68, Asp-76, Asp-121, Ser-123, Asp-139, Val-140, and Glu-142 each contribute to the Ca(2+) site. An intrachain disulfide couples Cys-73 to Cys-91. The 44-residue stretch at 139 to 182 (DVDECKEREDEELSCDHYCHNYIGGYYCSCRFGYILHTDNRTCR) folds into the EGF-like; calcium-binding domain. Intrachain disulfides connect Cys-143–Cys-157, Cys-153–Cys-166, Cys-168–Cys-181, and Cys-185–Cys-212. 3 residues coordinate Ca(2+): Asn-159, Tyr-160, and Gly-163. A (3R)-3-hydroxyasparagine modification is found at Asn-159. Asn-178 is a glycosylation site (N-linked (GlcNAc...) (complex) asparagine). Residues 185–297 (CSDNLFTQRT…RGWRLSYRAA (113 aa)) form the CUB 2 domain. Ca(2+)-binding residues include Glu-235, Asp-245, Asp-282, and Ser-284. A disulfide bridge connects residues Cys-242 and Cys-260. Sushi domains are found at residues 299 to 364 (NECP…TCKI) and 365 to 434 (VDCR…TCLP). Cystine bridges form between Cys-301–Cys-349, Cys-329–Cys-362, Cys-367–Cys-414, Cys-397–Cys-432, Cys-436–Cys-572, and Cys-475–Cys-491. The N-linked (GlcNAc...) (complex) asparagine glycan is linked to Asn-385. Asn-407 carries N-linked (GlcNAc...) asparagine glycosylation. The 248-residue stretch at 449 to 696 (IFNGRPAQKG…NKDWIQRVTG (248 aa)) folds into the Peptidase S1 domain. Catalysis depends on His-490, which acts as the Charge relay system. N-linked (GlcNAc) asparagine glycosylation is present at Leu-533. Asp-552 serves as the catalytic Charge relay system. N-linked (GlcNAc) asparagine glycosylation occurs at Glu-599. 2 disulfide bridges follow: Cys-614–Cys-631 and Cys-642–Cys-672. Catalysis depends on Ser-646, which acts as the Charge relay system.

Belongs to the peptidase S1 family. Homodimer. Interacts with the oligomeric lectins MBL2, FCN2 and FCN3; triggers the lectin pathway of complement through activation of C3. Interacts with SERPING1. Interacts with COLEC11; probably triggers the lectin pathway of complement. Post-translationally, the iron and 2-oxoglutarate dependent 3-hydroxylation of aspartate and asparagine is (R) stereospecific within EGF domains. In terms of processing, N-glycosylated. Some N-linked glycan are of the complex-type. Autoproteolytic processing of the proenzyme produces the active enzyme composed on the heavy and the light chain held together by a disulfide bond. Isoform 1 but not isoform 2 is activated through autoproteolytic processing. In terms of tissue distribution, protein of the plasma which is primarily expressed by liver.

It localises to the secreted. With respect to regulation, inhibited by SERPING1 and A2M. Functions in the lectin pathway of complement, which performs a key role in innate immunity by recognizing pathogens through patterns of sugar moieties and neutralizing them. The lectin pathway is triggered upon binding of mannan-binding lectin (MBL) and ficolins to sugar moieties which leads to activation of the associated proteases MASP1 and MASP2. Functions as an endopeptidase and may activate MASP2 or C2 or directly activate C3 the key component of complement reaction. Isoform 2 may have an inhibitory effect on the activation of the lectin pathway of complement or may cleave IGFBP5. Also plays a role in development. The sequence is that of Mannan-binding lectin serine protease 1 (MASP1) from Homo sapiens (Human).